We begin with the raw amino-acid sequence, 268 residues long: Tryptophan synthase alpha chain (268 aa).

Active-site proton acceptor residues include glutamate 49 and aspartate 60.

It belongs to the TrpA family. In terms of assembly, tetramer of two alpha and two beta chains.

It catalyses the reaction (1S,2R)-1-C-(indol-3-yl)glycerol 3-phosphate + L-serine = D-glyceraldehyde 3-phosphate + L-tryptophan + H2O. The protein operates within amino-acid biosynthesis; L-tryptophan biosynthesis; L-tryptophan from chorismate: step 5/5. Functionally, the alpha subunit is responsible for the aldol cleavage of indoleglycerol phosphate to indole and glyceraldehyde 3-phosphate. The chain is Tryptophan synthase alpha chain from Aliivibrio fischeri (strain ATCC 700601 / ES114) (Vibrio fischeri).